The primary structure comprises 361 residues: S-adenosylmethionine:tRNA ribosyltransferase-isomerase (361 aa).

The protein belongs to the QueA family. As to quaternary structure, monomer.

Its subcellular location is the cytoplasm. The catalysed reaction is 7-aminomethyl-7-carbaguanosine(34) in tRNA + S-adenosyl-L-methionine = epoxyqueuosine(34) in tRNA + adenine + L-methionine + 2 H(+). Its pathway is tRNA modification; tRNA-queuosine biosynthesis. Its function is as follows. Transfers and isomerizes the ribose moiety from AdoMet to the 7-aminomethyl group of 7-deazaguanine (preQ1-tRNA) to give epoxyqueuosine (oQ-tRNA). This chain is S-adenosylmethionine:tRNA ribosyltransferase-isomerase, found in Mesorhizobium japonicum (strain LMG 29417 / CECT 9101 / MAFF 303099) (Mesorhizobium loti (strain MAFF 303099)).